Consider the following 255-residue polypeptide: Ribosomal RNA small subunit methyltransferase A (255 aa).

Asn-12, Leu-14, Gly-39, Glu-60, Asp-84, and Asn-102 together coordinate S-adenosyl-L-methionine.

It belongs to the class I-like SAM-binding methyltransferase superfamily. rRNA adenine N(6)-methyltransferase family. RsmA subfamily.

It localises to the cytoplasm. The enzyme catalyses adenosine(1518)/adenosine(1519) in 16S rRNA + 4 S-adenosyl-L-methionine = N(6)-dimethyladenosine(1518)/N(6)-dimethyladenosine(1519) in 16S rRNA + 4 S-adenosyl-L-homocysteine + 4 H(+). Functionally, specifically dimethylates two adjacent adenosines (A1518 and A1519) in the loop of a conserved hairpin near the 3'-end of 16S rRNA in the 30S particle. May play a critical role in biogenesis of 30S subunits. This chain is Ribosomal RNA small subunit methyltransferase A, found in Methylobacillus flagellatus (strain ATCC 51484 / DSM 6875 / VKM B-1610 / KT).